The chain runs to 305 residues: Ornithine carbamoyltransferase (305 aa).

Residues 50–53, Gln77, Arg101, and 128–131 contribute to the carbamoyl phosphate site; these read STRT and HPCQ. Residues Asn159, Asp222, and 226-227 contribute to the L-ornithine site; that span reads SM. Carbamoyl phosphate-binding positions include 262-263 and Arg290; that span reads CL.

It belongs to the aspartate/ornithine carbamoyltransferase superfamily. OTCase family.

It is found in the cytoplasm. The enzyme catalyses carbamoyl phosphate + L-ornithine = L-citrulline + phosphate + H(+). It functions in the pathway amino-acid biosynthesis; L-arginine biosynthesis; L-arginine from L-ornithine and carbamoyl phosphate: step 1/3. In terms of biological role, reversibly catalyzes the transfer of the carbamoyl group from carbamoyl phosphate (CP) to the N(epsilon) atom of ornithine (ORN) to produce L-citrulline. The protein is Ornithine carbamoyltransferase of Synechococcus elongatus (strain ATCC 33912 / PCC 7942 / FACHB-805) (Anacystis nidulans R2).